The sequence spans 162 residues: Phosphopantetheine adenylyltransferase (162 aa).

A substrate-binding site is contributed by serine 11. ATP contacts are provided by residues serine 11–phenylalanine 12 and histidine 19. Lysine 43, leucine 75, and arginine 89 together coordinate substrate. ATP contacts are provided by residues glycine 90–arginine 92, glutamate 100, and tyrosine 125–serine 131.

Belongs to the bacterial CoaD family. In terms of assembly, homohexamer. It depends on Mg(2+) as a cofactor.

It is found in the cytoplasm. It carries out the reaction (R)-4'-phosphopantetheine + ATP + H(+) = 3'-dephospho-CoA + diphosphate. It functions in the pathway cofactor biosynthesis; coenzyme A biosynthesis; CoA from (R)-pantothenate: step 4/5. In terms of biological role, reversibly transfers an adenylyl group from ATP to 4'-phosphopantetheine, yielding dephospho-CoA (dPCoA) and pyrophosphate. The polypeptide is Phosphopantetheine adenylyltransferase (Geotalea uraniireducens (strain Rf4) (Geobacter uraniireducens)).